The chain runs to 430 residues: Histidinol dehydrogenase (430 aa).

Tyrosine 129, glutamine 190, and asparagine 213 together coordinate NAD(+). Substrate-binding residues include serine 236, glutamine 258, and histidine 261. Glutamine 258 and histidine 261 together coordinate Zn(2+). Catalysis depends on proton acceptor residues glutamate 326 and histidine 327. Residues histidine 327, aspartate 360, glutamate 414, and histidine 419 each coordinate substrate. Aspartate 360 contacts Zn(2+). Zn(2+) is bound at residue histidine 419.

The protein belongs to the histidinol dehydrogenase family. Zn(2+) serves as cofactor.

It catalyses the reaction L-histidinol + 2 NAD(+) + H2O = L-histidine + 2 NADH + 3 H(+). Its pathway is amino-acid biosynthesis; L-histidine biosynthesis; L-histidine from 5-phospho-alpha-D-ribose 1-diphosphate: step 9/9. Functionally, catalyzes the sequential NAD-dependent oxidations of L-histidinol to L-histidinaldehyde and then to L-histidine. In Gluconobacter oxydans (strain 621H) (Gluconobacter suboxydans), this protein is Histidinol dehydrogenase.